Reading from the N-terminus, the 504-residue chain is Cytochrome P450 2S1 (504 aa).

Cys440 contributes to the heme binding site.

Belongs to the cytochrome P450 family. Requires heme as cofactor. As to expression, expressed at higher levels in extrahepatic tissues including trachea, lung, stomach, small intestine, colon, kidney, breast, placenta and spleen. Expressed in peripheral blood leukocytes. Constitutively expressed in skin (at protein level).

The protein localises to the endoplasmic reticulum membrane. Its subcellular location is the microsome membrane. It catalyses the reaction all-trans-retinoate + reduced [NADPH--hemoprotein reductase] + O2 = all-trans-5,6-epoxyretinoate + oxidized [NADPH--hemoprotein reductase] + H2O + H(+). The catalysed reaction is all-trans-retinoate + reduced [NADPH--hemoprotein reductase] + O2 = all-trans-4-hydroxyretinoate + oxidized [NADPH--hemoprotein reductase] + H2O + H(+). The enzyme catalyses (5S)-hydroperoxy-(6E,8Z,11Z,14Z)-eicosatetraenoate = 5-oxo-(6E,8Z,11Z,14Z)-eicosatetraenoate + H2O. It carries out the reaction (12S)-hydroperoxy-(5Z,8Z,10E,14Z)-eicosatetraenoate = 12-oxo-(5Z,8Z,10E,14Z)-eicosatetraenoate + H2O. It catalyses the reaction (15S)-hydroperoxy-(5Z,8Z,11Z,13E)-eicosatetraenoate = 15-oxo-(5Z,8Z,11Z,13E)-eicosatetraenoate + H2O. The catalysed reaction is prostaglandin H2 = thromboxane A2. The enzyme catalyses prostaglandin H2 = (12S)-hydroxy-(5Z,8E,10E)-heptadecatrienoate + malonaldehyde. It carries out the reaction (13S)-hydroperoxy-(9Z,11E)-octadecadienoate = 13-oxo-(9Z,11E)-octadecadienoate + H2O. The protein operates within lipid metabolism; fatty acid metabolism. Its function is as follows. A cytochrome P450 monooxygenase involved in the metabolism of retinoids and eicosanoids. In epidermis, may contribute to the oxidative metabolism of all-trans-retinoic acid. For this activity, uses molecular oxygen inserting one oxygen atom into a substrate, and reducing the second into a water molecule, with two electrons provided by NADPH via cytochrome P450 reductase (NADPH--hemoprotein reductase). Additionally, displays peroxidase and isomerase activities toward various oxygenated eicosanoids such as prostaglandin H2 (PGH2) and hydroperoxyeicosatetraenoates (HPETEs). Independently of cytochrome P450 reductase, NADPH, and O2, catalyzes the breakdown of PGH2 to hydroxyheptadecatrienoic acid (HHT) and malondialdehyde (MDA), which is known to act as a mediator of DNA damage. This is Cytochrome P450 2S1 from Homo sapiens (Human).